The primary structure comprises 478 residues: Dynein regulatory complex subunit 4 (478 aa).

A compositionally biased stretch (basic residues) spans 1-12 (MAPKKKGKKGKA). The segment at 1-33 (MAPKKKGKKGKAKGTPIVDGLAPEDMSKEQVEE) is disordered. Residues 1-114 (MAPKKKGKKG…LLYEHQNNLT (114 aa)) form a regulates microtubule-binding region. A microtubule-binding region spans residues 115 to 258 (EMKAEGTVVM…NSLKEQMEDM (144 aa)). Residues 242-427 (LNNLALINSL…KDLQYELAQV (186 aa)) adopt a coiled-coil conformation. Residues 357-478 (QQKTGFKNLV…GPAGLVGTPT (122 aa)) are interaction with SMO.

This sequence belongs to the DRC4 family. In terms of assembly, component of the nexin-dynein regulatory complex (N-DRC). Interacts with microtubules. Interacts with SMO. Interacts (via coiled-coil domains) with RAB3B (in GTP-bound form). Interacts with DRC1. Interacts with DRC7. Expressed in respiratory epithelial cells (at protein level). Expressed in the heart, skeletal muscle, pancreas, liver, brain, trachea and lung. Weakly or not expressed in placenta and kidney.

The protein localises to the cytoplasm. It is found in the cytoskeleton. The protein resides in the cell projection. Its subcellular location is the cilium. It localises to the flagellum. The protein localises to the cilium axoneme. It is found in the cilium basal body. The protein resides in the golgi apparatus. Its subcellular location is the flagellum axoneme. Functionally, component of the nexin-dynein regulatory complex (N-DRC), a key regulator of ciliary/flagellar motility which maintains the alignment and integrity of the distal axoneme and regulates microtubule sliding in motile axonemes. Plays an important role in the assembly of the N-DRC linker. Plays dual roles at both the primary (or non-motile) cilia to regulate hedgehog signaling and in motile cilia to coordinate cilia movement. Required for proper motile cilia functioning. Positively regulates ciliary smoothened (SMO)-dependent Hedgehog (Hh) signaling pathway by facilitating the trafficking of SMO into the cilium and the stimulation of SMO activity in a GRK2-dependent manner. The polypeptide is Dynein regulatory complex subunit 4 (GAS8) (Homo sapiens (Human)).